Reading from the N-terminus, the 286-residue chain is Ribosomal RNA small subunit methyltransferase I (286 aa).

This sequence belongs to the methyltransferase superfamily. RsmI family.

It is found in the cytoplasm. It carries out the reaction cytidine(1402) in 16S rRNA + S-adenosyl-L-methionine = 2'-O-methylcytidine(1402) in 16S rRNA + S-adenosyl-L-homocysteine + H(+). Its function is as follows. Catalyzes the 2'-O-methylation of the ribose of cytidine 1402 (C1402) in 16S rRNA. The protein is Ribosomal RNA small subunit methyltransferase I of Escherichia coli O157:H7.